The chain runs to 340 residues: 3-isopropylmalate dehydrogenase (340 aa).

Residues arginine 88, arginine 98, arginine 122, and aspartate 212 each contribute to the substrate site. The Mg(2+) site is built by aspartate 212, aspartate 236, and aspartate 240. Residue 272–284 coordinates NAD(+); the sequence is GSAPDIAGQGIAD.

Belongs to the isocitrate and isopropylmalate dehydrogenases family. LeuB type 2 subfamily. Homodimer. Mg(2+) is required as a cofactor. The cofactor is Mn(2+).

It localises to the cytoplasm. The enzyme catalyses (2R,3S)-3-isopropylmalate + NAD(+) = 4-methyl-2-oxopentanoate + CO2 + NADH. The protein operates within amino-acid biosynthesis; L-leucine biosynthesis; L-leucine from 3-methyl-2-oxobutanoate: step 3/4. Its function is as follows. Catalyzes the oxidation of 3-carboxy-2-hydroxy-4-methylpentanoate (3-isopropylmalate) to 3-carboxy-4-methyl-2-oxopentanoate. The product decarboxylates to 4-methyl-2 oxopentanoate. This Corynebacterium glutamicum (strain ATCC 13032 / DSM 20300 / JCM 1318 / BCRC 11384 / CCUG 27702 / LMG 3730 / NBRC 12168 / NCIMB 10025 / NRRL B-2784 / 534) protein is 3-isopropylmalate dehydrogenase (leuB).